The sequence spans 434 residues: Trigger factor (434 aa).

The 86-residue stretch at 161–246 (EDRVVIDFTG…VKQVQAPVLP (86 aa)) folds into the PPIase FKBP-type domain.

The protein belongs to the FKBP-type PPIase family. Tig subfamily.

The protein resides in the cytoplasm. The catalysed reaction is [protein]-peptidylproline (omega=180) = [protein]-peptidylproline (omega=0). Its function is as follows. Involved in protein export. Acts as a chaperone by maintaining the newly synthesized protein in an open conformation. Functions as a peptidyl-prolyl cis-trans isomerase. This chain is Trigger factor, found in Dechloromonas aromatica (strain RCB).